The sequence spans 682 residues: DNA ligase (682 aa).

NAD(+)-binding positions include 42–46 (DAEYD), 91–92 (SL), and Glu-124. The N6-AMP-lysine intermediate role is filled by Lys-126. NAD(+) is bound by residues Arg-147, Glu-184, Lys-302, and Lys-326. Cys-420, Cys-423, Cys-438, and Cys-444 together coordinate Zn(2+). Positions 603–682 (IADNPLKGKS…QEFIALTGEN (80 aa)) constitute a BRCT domain.

This sequence belongs to the NAD-dependent DNA ligase family. LigA subfamily. Mg(2+) serves as cofactor. It depends on Mn(2+) as a cofactor.

It catalyses the reaction NAD(+) + (deoxyribonucleotide)n-3'-hydroxyl + 5'-phospho-(deoxyribonucleotide)m = (deoxyribonucleotide)n+m + AMP + beta-nicotinamide D-nucleotide.. In terms of biological role, DNA ligase that catalyzes the formation of phosphodiester linkages between 5'-phosphoryl and 3'-hydroxyl groups in double-stranded DNA using NAD as a coenzyme and as the energy source for the reaction. It is essential for DNA replication and repair of damaged DNA. This Actinobacillus pleuropneumoniae serotype 7 (strain AP76) protein is DNA ligase.